Reading from the N-terminus, the 554-residue chain is uncharacterized protein (554 aa).

Ca(2+) contacts are provided by Asp327 and Asn328.

This sequence belongs to the sulfatase family. It depends on Ca(2+) as a cofactor.

It is found in the cytoplasm. The protein resides in the nucleus. This is an uncharacterized protein from Schizosaccharomyces pombe (strain 972 / ATCC 24843) (Fission yeast).